The primary structure comprises 45 residues: DNA replication protein repEB (45 aa).

Its function is as follows. Involved in T4 DNA replication. Important for the priming of leading strand DNA synthesis at oriE. Binds to ssDNA. In Enterobacteria phage T4 (Bacteriophage T4), this protein is DNA replication protein repEB (repEB).